Here is a 1581-residue protein sequence, read N- to C-terminus: Pentafunctional AROM polypeptide (1581 aa).

The tract at residues 1–384 (MPEPTKISIL…YEPKASVVPN (384 aa)) is 3-dehydroquinate synthase. Residues 44–46 (DTN), 81–84 (EVSK), 114–116 (GGV), and aspartate 119 each bind NAD(+). Arginine 130 provides a ligand contact to 7-phospho-2-dehydro-3-deoxy-D-arabino-heptonate. 139–140 (TT) contributes to the NAD(+) binding site. The 7-phospho-2-dehydro-3-deoxy-D-arabino-heptonate site is built by aspartate 146 and lysine 152. Position 161 (lysine 161) interacts with NAD(+). Asparagine 162 contacts 7-phospho-2-dehydro-3-deoxy-D-arabino-heptonate. NAD(+) contacts are provided by residues 179–182 (FLET) and asparagine 190. Glutamate 194 lines the Zn(2+) pocket. 7-phospho-2-dehydro-3-deoxy-D-arabino-heptonate contacts are provided by residues 194–197 (EVIK) and lysine 250. Residue glutamate 260 is the Proton acceptor; for 3-dehydroquinate synthase activity of the active site. 7-phospho-2-dehydro-3-deoxy-D-arabino-heptonate-binding positions include 264 to 268 (RNLLN) and histidine 271. Residue histidine 271 participates in Zn(2+) binding. Histidine 275 functions as the Proton acceptor; for 3-dehydroquinate synthase activity in the catalytic mechanism. Positions 287 and 356 each coordinate 7-phospho-2-dehydro-3-deoxy-D-arabino-heptonate. Histidine 287 serves as a coordination point for Zn(2+). The EPSP synthase stretch occupies residues 397 to 842 (VHPGVPKESN…WDTLRQLFSV (446 aa)). Catalysis depends on cysteine 824, which acts as the For EPSP synthase activity. Residues 864-1056 (SASVFIIGMR…KQKKHSFFVS (193 aa)) are shikimate kinase. 871–878 (GMRGAGKT) serves as a coordination point for ATP. The segment at 1057–1277 (LTLPDLRSAS…AAPGQLSATE (221 aa)) is 3-dehydroquinase. Histidine 1180 (proton acceptor; for 3-dehydroquinate dehydratase activity) is an active-site residue. Lysine 1208 functions as the Schiff-base intermediate with substrate; for 3-dehydroquinate dehydratase activity in the catalytic mechanism. The shikimate dehydrogenase stretch occupies residues 1290–1581 (KKRFAIFGNP…ARTAVLGDSA (292 aa)).

This sequence in the N-terminal section; belongs to the sugar phosphate cyclases superfamily. Dehydroquinate synthase family. In the 2nd section; belongs to the EPSP synthase family. The protein in the 3rd section; belongs to the shikimate kinase family. It in the 4th section; belongs to the type-I 3-dehydroquinase family. This sequence in the C-terminal section; belongs to the shikimate dehydrogenase family. Homodimer. Zn(2+) serves as cofactor.

It is found in the cytoplasm. It catalyses the reaction 7-phospho-2-dehydro-3-deoxy-D-arabino-heptonate = 3-dehydroquinate + phosphate. The enzyme catalyses 3-dehydroquinate = 3-dehydroshikimate + H2O. The catalysed reaction is shikimate + NADP(+) = 3-dehydroshikimate + NADPH + H(+). It carries out the reaction shikimate + ATP = 3-phosphoshikimate + ADP + H(+). It catalyses the reaction 3-phosphoshikimate + phosphoenolpyruvate = 5-O-(1-carboxyvinyl)-3-phosphoshikimate + phosphate. Its pathway is metabolic intermediate biosynthesis; chorismate biosynthesis; chorismate from D-erythrose 4-phosphate and phosphoenolpyruvate: step 2/7. It participates in metabolic intermediate biosynthesis; chorismate biosynthesis; chorismate from D-erythrose 4-phosphate and phosphoenolpyruvate: step 3/7. It functions in the pathway metabolic intermediate biosynthesis; chorismate biosynthesis; chorismate from D-erythrose 4-phosphate and phosphoenolpyruvate: step 4/7. The protein operates within metabolic intermediate biosynthesis; chorismate biosynthesis; chorismate from D-erythrose 4-phosphate and phosphoenolpyruvate: step 5/7. Its pathway is metabolic intermediate biosynthesis; chorismate biosynthesis; chorismate from D-erythrose 4-phosphate and phosphoenolpyruvate: step 6/7. In terms of biological role, the AROM polypeptide catalyzes 5 consecutive enzymatic reactions in prechorismate polyaromatic amino acid biosynthesis. This is Pentafunctional AROM polypeptide from Aspergillus terreus (strain NIH 2624 / FGSC A1156).